We begin with the raw amino-acid sequence, 199 residues long: Pre T-cell antigen receptor alpha (199 aa).

A signal peptide spans 1–16 (MARTWLLLLLGVRCQA). Topologically, residues 17–146 (LPSGIAGTPF…PEPLGGTQRQ (130 aa)) are extracellular. C47 and C107 are oxidised to a cystine. N-linked (GlcNAc...) asparagine glycosylation is found at N67 and N117. A helical transmembrane segment spans residues 147 to 167 (VLWLSLLRLLLFKLLLLDVLL). Over 168–199 (TCSHLRLHVLAGQHLQPPPSRKSLPPTHRIWT) the chain is Cytoplasmic.

In terms of assembly, heterodimer with TCRB; disulfide linked. This heterodimer assembles with CD3 proteins into a signaling-competent pre-T-cell receptor complex. Interacts with RHBDD1. In terms of tissue distribution, isoform 1 is expressed at higher levels than isoform 2 in the thymus while only isoform 2 is expressed in polyclonal beta-only cells. Isoform 1 shows a predominant expression in immature thymocytes.

It is found in the membrane. The protein resides in the cell membrane. Component of the pre-T-cell receptor complex (composed of PTCRA, TCRB and the CD3 complex) that plays a crucial role in early T-cell development, particularly alpha-beta T cell differentiation. Isoform 1 acts to retain most TCRB intracellularly, while isoform 2 permits higher levels of cell surface TCRB expression and facilitates signaling from the CD3-TCRB complex. The chain is Pre T-cell antigen receptor alpha from Mus musculus (Mouse).